We begin with the raw amino-acid sequence, 172 residues long: 3-hydroxydecanoyl-[acyl-carrier-protein] dehydratase (172 aa).

H71 is a catalytic residue.

It belongs to the thioester dehydratase family. FabA subfamily. As to quaternary structure, homodimer.

It is found in the cytoplasm. It catalyses the reaction a (3R)-hydroxyacyl-[ACP] = a (2E)-enoyl-[ACP] + H2O. It carries out the reaction (3R)-hydroxydecanoyl-[ACP] = (2E)-decenoyl-[ACP] + H2O. The catalysed reaction is (2E)-decenoyl-[ACP] = (3Z)-decenoyl-[ACP]. It participates in lipid metabolism; fatty acid biosynthesis. Functionally, necessary for the introduction of cis unsaturation into fatty acids. Catalyzes the dehydration of (3R)-3-hydroxydecanoyl-ACP to E-(2)-decenoyl-ACP and then its isomerization to Z-(3)-decenoyl-ACP. Can catalyze the dehydratase reaction for beta-hydroxyacyl-ACPs with saturated chain lengths up to 16:0, being most active on intermediate chain length. The polypeptide is 3-hydroxydecanoyl-[acyl-carrier-protein] dehydratase (Escherichia coli O139:H28 (strain E24377A / ETEC)).